A 783-amino-acid chain; its full sequence is Cation/H(+) antiporter 11 (783 aa).

12 helical membrane-spanning segments follow: residues 31 to 51 (VVFGYSLPLLEIQIILIFFCI), 61 to 81 (IGVSQIVSYMIAGLILGPQLF), 101 to 120 (AALRCISVFGRLMFTFLMTV), 135 to 155 (VVIGIVSFFAPLFSLSFLNLF), 175 to 195 (VIVITQSQILLPSTTYILLEL), 205 to 225 (LALSASAINDMLGIFAMIVAT), 244 to 264 (AVIIFFLIVFFVFKPMVQWII), 276 to 295 (IYIHAVILTAFASAAYFVFF), 300 to 322 (VLGPLIIGIIIPEGPPLGSALEA), 360 to 380 (IFLTLLILVIKLVACLTLCLY), 389 to 409 (LAVSLILSYKSFVEFVLYEAV), and 418 to 438 (ATYAFLILYSLLSAGIVPMVV).

The protein belongs to the monovalent cation:proton antiporter 2 (CPA2) transporter (TC 2.A.37) family. CHX (TC 2.A.37.4) subfamily. In terms of tissue distribution, specifically expressed in pollen.

The protein localises to the membrane. Its function is as follows. May operate as a cation/H(+) antiporter. The protein is Cation/H(+) antiporter 11 (CHX11) of Arabidopsis thaliana (Mouse-ear cress).